A 36-amino-acid polypeptide reads, in one-letter code: Photosystem II reaction center protein M (36 aa).

The residue at position 1 (methionine 1) is a Blocked amino end (Met). At 1-11 (MEVNQLGFIAT) the chain is on the lumenal side. The chain crosses the membrane as a helical span at residues 12-27 (ALFVLVPSVFLIILYV). The Cytoplasmic portion of the chain corresponds to 28-36 (QTESQQKSS).

This sequence belongs to the PsbM family. In terms of assembly, PSII is composed of 1 copy each of membrane proteins PsbA, PsbB, PsbC, PsbD, PsbE, PsbF, PsbH, PsbI, PsbJ, PsbK, PsbL, PsbM, PsbT, PsbX, PsbY, PsbZ, Psb30/Ycf12, peripheral proteins PsbO, CyanoQ (PsbQ), PsbU, PsbV, PsbU, PsbV and a large number of cofactors. It forms dimeric complexes. PSII binds multiple chlorophylls, carotenoids and specific lipids. serves as cofactor.

The protein localises to the cellular thylakoid membrane. One of the components of the core complex of photosystem II (PSII). PSII is a light-driven water:plastoquinone oxidoreductase that uses light energy to abstract electrons from H(2)O, generating O(2) and a proton gradient subsequently used for ATP formation. It consists of a core antenna complex that captures photons, and an electron transfer chain that converts photonic excitation into a charge separation. This subunit is found at the monomer-monomer interface. Probably involved in dimerization of PSII; at the monomer-monomer interface the only protein-protein contacts observed are between the 2 PsbM subunits. Lipids, chlorophylls and carotenoids contribute strongly to PSII dimerization. This chain is Photosystem II reaction center protein M, found in Thermostichus vulcanus (Synechococcus vulcanus).